The sequence spans 258 residues: Ribosomal RNA small subunit methyltransferase J (258 aa).

S-adenosyl-L-methionine-binding positions include 123 to 124 and Asp177; that span reads ER. The disordered stretch occupies residues 232–258; sequence IDGPKPSHSLEGKSSRYDIYPKKALKA. Residues 239 to 252 show a composition bias toward basic and acidic residues; the sequence is HSLEGKSSRYDIYP.

It belongs to the methyltransferase superfamily. RsmJ family.

It is found in the cytoplasm. The enzyme catalyses guanosine(1516) in 16S rRNA + S-adenosyl-L-methionine = N(2)-methylguanosine(1516) in 16S rRNA + S-adenosyl-L-homocysteine + H(+). Functionally, specifically methylates the guanosine in position 1516 of 16S rRNA. This chain is Ribosomal RNA small subunit methyltransferase J, found in Pseudomonas putida (strain GB-1).